Here is a 512-residue protein sequence, read N- to C-terminus: MKRCYITTPIYYASGKPHIGHAFTTILADVIKRYKQQNGYEAYFLTGTDEHGNKIESKAKSLGLDPQTFVDQNVAYFQQMWKQLDINFDHFIRTTDLSHKAQVQHAFQLLYDKGLIYQSNWEGAYCVECEQNYFTYDKQTMLCEIGHQLTLVQEPSLFIAFKDSKDWIGEMIATNKLNITPESRAAELKNNFLDGGLNDLALTRQNVTWGIPVPFDNKQTIYVWFDALFNYITNLGFAHNDPKFNKWWNNNDEEHEVIHLISREITRFHCIYWPIFLHQLGFKLPTQFLSHGWIVDGNGHKMSKSLGNVISPEELLAQFGVDGTRYCLLKEMRLDKDNRCSMAIFKDIYNADLANSFGNHASRTFGMIKKYLGGQLDFIEVQDPQVKQLMDQANQAMVQFDTAWNNFQFYKGINGLLQLVFQASKLIDQLKPWELVKQTDYTLLKQLLFACVRCTQVCFVLLAPILVHTSTQIFDLFNFSAQARSKTHLADPQQLQKISLAPVIQPLFKRLD.

The 'HIGH' region motif lies at 11-21 (YYASGKPHIGH). Zn(2+)-binding residues include Cys126, Cys129, Cys143, and His147. The 'KMSKS' region motif lies at 301-305 (KMSKS). Lys304 contacts ATP.

The protein belongs to the class-I aminoacyl-tRNA synthetase family. MetG type 2A subfamily. In terms of assembly, monomer. Zn(2+) is required as a cofactor.

The protein resides in the cytoplasm. The catalysed reaction is tRNA(Met) + L-methionine + ATP = L-methionyl-tRNA(Met) + AMP + diphosphate. In terms of biological role, is required not only for elongation of protein synthesis but also for the initiation of all mRNA translation through initiator tRNA(fMet) aminoacylation. This Mycoplasma pneumoniae (strain ATCC 29342 / M129 / Subtype 1) (Mycoplasmoides pneumoniae) protein is Methionine--tRNA ligase (metG).